Consider the following 122-residue polypeptide: Large ribosomal subunit protein uL14 (122 aa).

This sequence belongs to the universal ribosomal protein uL14 family. As to quaternary structure, part of the 50S ribosomal subunit. Forms a cluster with proteins L3 and L19. In the 70S ribosome, L14 and L19 interact and together make contacts with the 16S rRNA in bridges B5 and B8.

Its function is as follows. Binds to 23S rRNA. Forms part of two intersubunit bridges in the 70S ribosome. This is Large ribosomal subunit protein uL14 from Brucella abortus (strain 2308).